A 418-amino-acid polypeptide reads, in one-letter code: UDP-glucuronic acid decarboxylase 1 (418 aa).

The Cytoplasmic segment spans residues 1-17 (MMRMSWMVTVINRRMMK). Residues 18-38 (ILIALALIAYIASVWGTYANM) form a helical; Signal-anchor for type II membrane protein membrane-spanning segment. Residues 39-418 (RSIQEHGEMK…RMKKGRPRHN (380 aa)) lie on the Lumenal side of the membrane. G96, F97, V98, D117, N118, F120, T121, G122, D142, and V143 together coordinate NAD(+). L147 and Y148 together coordinate UDP-alpha-D-glucuronate. NAD(+)-binding residues include L157 and S159. Residue K175 coordinates UDP-alpha-D-glucuronate. T176 contacts NAD(+). The UDP-alpha-D-glucuronate site is built by N183, G186, K189, and R190. Residues A198, Y229, and K233 each contribute to the NAD(+) site. The Proton acceptor role is filled by Y229. Residues Y243, Q246, and E247 each coordinate UDP-alpha-D-glucuronate. NAD(+) is bound by residues T259, H265, and R270. N314 and N383 each carry an N-linked (GlcNAc...) asparagine glycan. The disordered stretch occupies residues 397–418 (ANNQYIPKPKAARMKKGRPRHN). The segment covering 406-418 (KAARMKKGRPRHN) has biased composition (basic residues).

This sequence belongs to the NAD(P)-dependent epimerase/dehydratase family. UDP-glucuronic acid decarboxylase subfamily. As to quaternary structure, homodimer and homotetramer. The cofactor is NAD(+).

It is found in the golgi apparatus. Its subcellular location is the golgi stack membrane. It carries out the reaction UDP-alpha-D-glucuronate + H(+) = UDP-alpha-D-xylose + CO2. It participates in nucleotide-sugar biosynthesis; UDP-alpha-D-xylose biosynthesis; UDP-alpha-D-xylose from UDP-alpha-D-glucuronate: step 1/1. Catalyzes the NAD-dependent decarboxylation of UDP-glucuronic acid to UDP-xylose. Necessary for the biosynthesis of the core tetrasaccharide in glycosaminoglycan biosynthesis. Essential during embryogenesis for craniofacial development. The protein is UDP-glucuronic acid decarboxylase 1 of Danio rerio (Zebrafish).